A 323-amino-acid chain; its full sequence is MEFPFDVDALFPERITVLDQHLRPPARRPGTTTPARVDLQQQIMTIIDELGKASAKAQNLSAPITSASRMQSNRHVVYILKDSSGRPAGKGAIIGFIKVGYKKLFVLDDREAHNEVEPLCILDFYIHESVQRHGHGRELFQYMLQKERVEPHQLAIDRPSQKLLKFLNKHYNLETTVPQVNNFVIFEGFFAHQHRPPAPSLRATRHSRAAAVDPTPTAPARKLPPKRAEGDIKPYSSSDREFLKVAVEPPWPLNRAPRRATPPAHPPPRSSSLGNSPERGPLRPFVPEQELLRSLRLCPPHPTARLLLAADPGGSPAQRRRTR.

One can recognise an N-acetyltransferase domain in the interval 1-190 (MEFPFDVDAL…NNFVIFEGFF (190 aa)). Lys56 is subject to N6-acetyllysine; by autocatalysis. 124-137 (FYIHESVQRHGHGR) lines the acetyl-CoA pocket. Position 146 is an N6-acetyllysine; by autocatalysis (Lys146). 160–169 (SQKLLKFLNK) contributes to the acetyl-CoA binding site. Residues 196-239 (PPAPSLRATRHSRAAAVDPTPTAPARKLPPKRAEGDIKPYSSSD) form a disordered region. Residues 209–220 (AAAVDPTPTAPA) are compositionally biased toward low complexity. The segment covering 226-239 (KRAEGDIKPYSSSD) has biased composition (basic and acidic residues). Lys233 and Lys244 each carry N6-acetyllysine; by autocatalysis. Residues 252–287 (PLNRAPRRATPPAHPPPRSSSLGNSPERGPLRPFVP) form a disordered region. Residues Ser272 and Ser276 each carry the phosphoserine modification. Position 305 is an asymmetric dimethylarginine (Arg305). Ser315 carries the phosphoserine modification. An Omega-N-methylarginine modification is found at Arg323.

This sequence belongs to the acetyltransferase ATAT1 family. As to quaternary structure, component of the BBSome complex. Interacts with AP2 alpha-adaptins, including AP2A2, but not with AP1 gamma-adaptin (AP1G1/AP1G2); this interaction is required for efficient alpha-tubulin acetylation, hence clathrin-coated pits are sites of microtubule acetylation. Post-translationally, autoacetylation strongly increases tubulin acetylation.

The protein resides in the cytoplasm. It is found in the membrane. The protein localises to the clathrin-coated pit. Its subcellular location is the cell junction. It localises to the focal adhesion. The protein resides in the cell projection. It is found in the axon. The protein localises to the cytoskeleton. Its subcellular location is the spindle. The catalysed reaction is L-lysyl-[alpha-tubulin] + acetyl-CoA = N(6)-acetyl-L-lysyl-[alpha-tubulin] + CoA + H(+). Functionally, specifically acetylates 'Lys-40' in alpha-tubulin on the lumenal side of microtubules. Promotes microtubule destabilization and accelerates microtubule dynamics; this activity may be independent of acetylation activity. Acetylates alpha-tubulin with a slow enzymatic rate, due to a catalytic site that is not optimized for acetyl transfer. Enters the microtubule through each end and diffuses quickly throughout the lumen of microtubules. Acetylates only long/old microtubules because of its slow acetylation rate since it does not have time to act on dynamically unstable microtubules before the enzyme is released. Required for normal sperm flagellar function. Promotes directional cell locomotion and chemotaxis, through AP2A2-dependent acetylation of alpha-tubulin at clathrin-coated pits that are concentrated at the leading edge of migrating cells. May facilitate primary cilium assembly. The polypeptide is Alpha-tubulin N-acetyltransferase 1 (Macaca mulatta (Rhesus macaque)).